The chain runs to 314 residues: Ribosome maturation factor RimP (314 aa).

Disordered stretches follow at residues 1–20 (MDLDGKVQPPSAQVGQQPLS), 152–176 (PIEASSPIGGSKGALRLTRTDAKPE), and 206–314 (AAKA…PAPK). The span at 10–19 (PSAQVGQQPL) shows a compositional bias: polar residues. Residues 215 to 227 (DGNNEEQDEEQEE) are compositionally biased toward acidic residues. Residues 247 to 256 (PEHNPAQNPI) are compositionally biased toward polar residues. Composition is skewed to basic and acidic residues over residues 270–279 (TEFKKSKTGE) and 303–314 (SGHDMPRKPAPK).

The protein belongs to the RimP family.

The protein localises to the cytoplasm. Required for maturation of 30S ribosomal subunits. The chain is Ribosome maturation factor RimP from Beijerinckia indica subsp. indica (strain ATCC 9039 / DSM 1715 / NCIMB 8712).